We begin with the raw amino-acid sequence, 536 residues long: Probable cytochrome P450 12a5, mitochondrial (536 aa).

A heme-binding site is contributed by Cys-482.

It belongs to the cytochrome P450 family. Heme serves as cofactor.

It is found in the mitochondrion membrane. The protein is Probable cytochrome P450 12a5, mitochondrial (Cyp12a5) of Drosophila melanogaster (Fruit fly).